The following is a 153-amino-acid chain: Ribonuclease VapC6 (153 aa).

The PINc domain occupies 6 to 152; it reads VFIDSSVMVG…EKVDFIEIIK (147 aa). Residues Asp-9 and Asp-120 each contribute to the Mg(2+) site.

Belongs to the PINc/VapC protein family. It depends on Mg(2+) as a cofactor.

Toxic component of a type II toxin-antitoxin (TA) system. An RNase. This chain is Ribonuclease VapC6, found in Methanocaldococcus jannaschii (strain ATCC 43067 / DSM 2661 / JAL-1 / JCM 10045 / NBRC 100440) (Methanococcus jannaschii).